Here is a 394-residue protein sequence, read N- to C-terminus: Large ribosomal subunit protein mL44 (394 aa).

The transit peptide at 1–21 (MFRHVAQNLGSRNTSIQSYRL) directs the protein to the mitochondrion.

It belongs to the ribonuclease III family. Mitochondrion-specific ribosomal protein mL44 subfamily. As to quaternary structure, component of the mitochondrial large ribosomal subunit (mt-LSU).

The protein resides in the mitochondrion. Component of the mitochondrial ribosome. May have a function in the assembly/stability of nascent mitochondrial polypeptides exiting the ribosome. This chain is Large ribosomal subunit protein mL44, found in Caenorhabditis elegans.